Here is a 291-residue protein sequence, read N- to C-terminus: Mitochondrial fission factor (291 aa).

The Cytoplasmic portion of the chain corresponds to 1–271; it reads MAEISRIQYE…ENKERAKREM (271 aa). At Thr-89 the chain carries Phosphothreonine. Residues 106-134 form a disordered region; that stretch reads LERPLPTPQSEESRAVGRLKRERSMSENA. Phosphoserine occurs at positions 129, 131, and 146. At Thr-149 the chain carries Phosphothreonine. Phosphoserine is present on residues Ser-151, Ser-178, Ser-182, and Ser-244. Residues 240-271 adopt a coiled-coil conformation; the sequence is VDAASLRRQIIKLNRRLQLLEEENKERAKREM. Residues 272–289 form a helical; Anchor for type IV membrane protein membrane-spanning segment; the sequence is VMYSITVAFWLLNSWLWF. Residues 290–291 lie on the Mitochondrial intermembrane side of the membrane; sequence RR.

It belongs to the Tango11 family. As to quaternary structure, homodimer. Interacts with DNM1L. Interacts with C11orf65/MFI; the interaction inhibits MFF interaction with DNM1L.

The protein resides in the mitochondrion outer membrane. Its subcellular location is the peroxisome. The protein localises to the cytoplasmic vesicle. It is found in the secretory vesicle. It localises to the synaptic vesicle. In terms of biological role, plays a role in mitochondrial and peroxisomal fission. Promotes the recruitment and association of the fission mediator dynamin-related protein 1 (DNM1L) to the mitochondrial surface. May be involved in regulation of synaptic vesicle membrane dynamics by recruitment of DNM1L to clathrin-containing vesicles. This Mus musculus (Mouse) protein is Mitochondrial fission factor (Mff).